The chain runs to 913 residues: Protein translocase subunit SecA (913 aa).

Residues glutamine 87, glycine 105 to threonine 109, and aspartate 512 contribute to the ATP site. The segment at leucine 864–glutamine 913 is disordered. Positions 897, 899, 908, and 909 each coordinate Zn(2+). A compositionally biased stretch (basic residues) spans lysine 903–glutamine 913.

This sequence belongs to the SecA family. In terms of assembly, monomer and homodimer. Part of the essential Sec protein translocation apparatus which comprises SecA, SecYEG and auxiliary proteins SecDF-YajC and YidC. Zn(2+) serves as cofactor.

It is found in the cell inner membrane. The protein resides in the cytoplasm. The enzyme catalyses ATP + H2O + cellular proteinSide 1 = ADP + phosphate + cellular proteinSide 2.. Its function is as follows. Part of the Sec protein translocase complex. Interacts with the SecYEG preprotein conducting channel. Has a central role in coupling the hydrolysis of ATP to the transfer of proteins into and across the cell membrane, serving both as a receptor for the preprotein-SecB complex and as an ATP-driven molecular motor driving the stepwise translocation of polypeptide chains across the membrane. This chain is Protein translocase subunit SecA, found in Stutzerimonas stutzeri (strain A1501) (Pseudomonas stutzeri).